The following is a 576-amino-acid chain: Probable metalloreductase AIM14 (576 aa).

7 consecutive transmembrane segments (helical) span residues 21–41 (IKYG…LALL), 70–90 (AIHL…HYSL), 101–118 (LGRL…LTLR), 142–162 (IITV…AIDD), 177–197 (FVGF…IGPM), 204–224 (LFYI…PIHS), and 230–250 (FPFL…RIVF). The 119-residue stretch at 101–219 (LGRLSYALIP…NLVNVAFILL (119 aa)) folds into the Ferric oxidoreductase domain. In terms of domain architecture, FAD-binding FR-type spans 250-388 (FAKSLMILNK…GGSGISFALP (139 aa)). Positions 480–505 (ISNFNSENADSNDNTPETSHSPTKEN) are enriched in polar residues. Residues 480 to 507 (ISNFNSENADSNDNTPETSHSPTKENGS) form a disordered region.

Belongs to the ferric reductase (FRE) family. AIM14 subfamily. Interacts with ribosomes.

Its subcellular location is the membrane. Its function is as follows. Probable cell surface metalloreductase. May be involved in iron or copper homeostasis. This Saccharomyces cerevisiae (strain Lalvin EC1118 / Prise de mousse) (Baker's yeast) protein is Probable metalloreductase AIM14 (AIM14).